Consider the following 222-residue polypeptide: Sperm acrosome-associated protein 9 (222 aa).

Residues Gln-164–Leu-222 are disordered.

Microtubule inner protein component of sperm flagellar doublet microtubules. Interacts with CABP1 and CALR. Interacts with INCA1. Interacts with microtubules.

It localises to the cytoplasm. Its subcellular location is the cytoplasmic vesicle. It is found in the secretory vesicle. The protein resides in the acrosome. The protein localises to the cytoskeleton. It localises to the cilium basal body. Its subcellular location is the flagellum axoneme. It is found in the cilium axoneme. The protein resides in the nucleus. Microtubule inner protein (MIP) part of the dynein-decorated doublet microtubules (DMTs) of multiciliated respiratory cells and the distal singlet microtubules of monoflagellated spermatozoa. Forms an extensive interaction network cross-linking the lumen of axonemal doublet microtubules. The protein is Sperm acrosome-associated protein 9 of Homo sapiens (Human).